We begin with the raw amino-acid sequence, 459 residues long: Putrescine aminotransferase (459 aa).

Residues glycine 150–threonine 151 and glutamine 274 contribute to the pyridoxal 5'-phosphate site. At lysine 300 the chain carries N6-(pyridoxal phosphate)lysine. Threonine 332 lines the pyridoxal 5'-phosphate pocket.

Belongs to the class-III pyridoxal-phosphate-dependent aminotransferase family. Putrescine aminotransferase subfamily. Pyridoxal 5'-phosphate serves as cofactor.

The enzyme catalyses an alkane-alpha,omega-diamine + 2-oxoglutarate = an omega-aminoaldehyde + L-glutamate. It carries out the reaction putrescine + 2-oxoglutarate = 1-pyrroline + L-glutamate + H2O. It catalyses the reaction cadaverine + 2-oxoglutarate = 5-aminopentanal + L-glutamate. It functions in the pathway amine and polyamine degradation; putrescine degradation; 4-aminobutanal from putrescine (transaminase route): step 1/1. Catalyzes the aminotransferase reaction from putrescine to 2-oxoglutarate, leading to glutamate and 4-aminobutanal, which spontaneously cyclizes to form 1-pyrroline. This is the first step in one of two pathways for putrescine degradation, where putrescine is converted into 4-aminobutanoate (gamma-aminobutyrate or GABA) via 4-aminobutanal. Also functions as a cadaverine transaminase in a a L-lysine degradation pathway to succinate that proceeds via cadaverine, glutarate and L-2-hydroxyglutarate. The protein is Putrescine aminotransferase of Salmonella heidelberg (strain SL476).